The following is a 411-amino-acid chain: LL-diaminopimelate aminotransferase (411 aa).

Residues Y15 and G42 each coordinate substrate. Pyridoxal 5'-phosphate is bound by residues Y72, 108 to 109, Y132, N188, Y219, and 247 to 249; these read AK and SFS. The substrate site is built by K109, Y132, and N188. An N6-(pyridoxal phosphate)lysine modification is found at K250. Residues R258 and N293 each coordinate pyridoxal 5'-phosphate. 2 residues coordinate substrate: N293 and R389.

This sequence belongs to the class-I pyridoxal-phosphate-dependent aminotransferase family. LL-diaminopimelate aminotransferase subfamily. As to quaternary structure, homodimer. Requires pyridoxal 5'-phosphate as cofactor.

The catalysed reaction is (2S,6S)-2,6-diaminopimelate + 2-oxoglutarate = (S)-2,3,4,5-tetrahydrodipicolinate + L-glutamate + H2O + H(+). The protein operates within amino-acid biosynthesis; L-lysine biosynthesis via DAP pathway; LL-2,6-diaminopimelate from (S)-tetrahydrodipicolinate (aminotransferase route): step 1/1. Functionally, involved in the synthesis of meso-diaminopimelate (m-DAP or DL-DAP), required for both lysine and peptidoglycan biosynthesis. Catalyzes the direct conversion of tetrahydrodipicolinate to LL-diaminopimelate. The protein is LL-diaminopimelate aminotransferase of Desulfitobacterium hafniense (strain Y51).